Here is a 161-residue protein sequence, read N- to C-terminus: Protein-export protein SecB (161 aa).

The protein belongs to the SecB family. As to quaternary structure, homotetramer, a dimer of dimers. One homotetramer interacts with 1 SecA dimer.

The protein resides in the cytoplasm. One of the proteins required for the normal export of preproteins out of the cell cytoplasm. It is a molecular chaperone that binds to a subset of precursor proteins, maintaining them in a translocation-competent state. It also specifically binds to its receptor SecA. The chain is Protein-export protein SecB from Coxiella burnetii (strain CbuG_Q212) (Coxiella burnetii (strain Q212)).